The chain runs to 73 residues: Large ribosomal subunit protein uL29 (73 aa).

The tract at residues 1–20 is disordered; the sequence is MYKAKDLRDQSLEELEATHD.

This sequence belongs to the universal ribosomal protein uL29 family.

The chain is Large ribosomal subunit protein uL29 from Protochlamydia amoebophila (strain UWE25).